Reading from the N-terminus, the 513-residue chain is Ribonuclease Y (513 aa).

The helical transmembrane segment at 4 to 24 threads the bilayer; sequence TTSLIIAILAGILGIVIGFFF. A disordered region spans residues 78 to 106; sequence KSRLKEISRQEDRLNSKEENLERKNASLE. A KH domain is found at 203–288; the sequence is TVSVVNLPND…EMVEKARKDV (86 aa). Residues 329–422 form the HD domain; the sequence is VLKHSIEVSN…VQSADAISAA (94 aa).

It belongs to the RNase Y family.

It is found in the cell membrane. Functionally, endoribonuclease that initiates mRNA decay. In Finegoldia magna (strain ATCC 29328 / DSM 20472 / WAL 2508) (Peptostreptococcus magnus), this protein is Ribonuclease Y.